The primary structure comprises 281 residues: Phytanoyl-CoA dioxygenase 1 (281 aa).

2-oxoglutarate is bound by residues lysine 98, methionine 137, 152-154 (HQD), and tryptophan 169. The Fe cation site is built by histidine 152 and aspartate 154. Histidine 237 contributes to the Fe cation binding site. Residues serine 239 and arginine 248 each contribute to the 2-oxoglutarate site.

It belongs to the PhyH family. Fe cation serves as cofactor. Requires L-ascorbate as cofactor.

The enzyme catalyses phytanoyl-CoA + 2-oxoglutarate + O2 = 2-hydroxyphytanoyl-CoA + succinate + CO2. The protein operates within lipid metabolism; fatty acid metabolism. Its function is as follows. Converts phytanoyl-CoA to 2-hydroxyphytanoyl-CoA. In Oryza sativa subsp. japonica (Rice), this protein is Phytanoyl-CoA dioxygenase 1.